The chain runs to 151 residues: FAD synthase (151 aa).

Residues 12–13 (TF), 17–20 (HPGH), Asp-97, and Tyr-125 contribute to the ATP site.

It belongs to the archaeal FAD synthase family. As to quaternary structure, homodimer. A divalent metal cation serves as cofactor.

It catalyses the reaction FMN + ATP + H(+) = FAD + diphosphate. It functions in the pathway cofactor biosynthesis; FAD biosynthesis; FAD from FMN: step 1/1. Catalyzes the transfer of the AMP portion of ATP to flavin mononucleotide (FMN) to produce flavin adenine dinucleotide (FAD) coenzyme. The chain is FAD synthase from Methanococcus vannielii (strain ATCC 35089 / DSM 1224 / JCM 13029 / OCM 148 / SB).